Reading from the N-terminus, the 267-residue chain is Adenosine 5'-phosphosulfate reductase (267 aa).

Positions 1 to 29 are disordered; it reads MPPFATIPATERNSAAQHQDPSPMSQPFD. A compositionally biased stretch (polar residues) spans 11–25; that stretch reads ERNSAAQHQDPSPMS. Residues Cys-139, Cys-140, Cys-228, and Cys-231 each coordinate [4Fe-4S] cluster. Residue Cys-256 is the Nucleophile; cysteine thiosulfonate intermediate of the active site.

Belongs to the PAPS reductase family. CysH subfamily. [4Fe-4S] cluster is required as a cofactor.

Its subcellular location is the cytoplasm. The enzyme catalyses [thioredoxin]-disulfide + sulfite + AMP + 2 H(+) = adenosine 5'-phosphosulfate + [thioredoxin]-dithiol. The protein operates within sulfur metabolism; hydrogen sulfide biosynthesis; sulfite from sulfate. Functionally, catalyzes the formation of sulfite from adenosine 5'-phosphosulfate (APS) using thioredoxin as an electron donor. The protein is Adenosine 5'-phosphosulfate reductase of Pseudomonas aeruginosa (strain LESB58).